We begin with the raw amino-acid sequence, 48 residues long: Large ribosomal subunit protein bL33B (48 aa).

Belongs to the bacterial ribosomal protein bL33 family.

The chain is Large ribosomal subunit protein bL33B from Streptococcus thermophilus (strain CNRZ 1066).